A 294-amino-acid chain; its full sequence is MPWIQVKLNATSENAELISDMLVEETGALSVTFLDAKDTPIFEPLPGETRLWGETDIVALYDAETDMDLVITQLKASAVLDDNFAYKIEQLEDKDWEREWMDNFHPMKFGERLWICPSWREIPEPDAINVMLDPGLAFGTGTHATTALCLEWLESIDLTGKTVIDFGCGSGILAIAAIKLGAAKVVGIDIDPQAITASKDNATRNGVAEQLTLFLPQDQPENLVADVVVANILAAPLRELSSIITAHVKPGGALAMSGVLDTQANNVASYYSDNFTLDAIAEQQEWCRISGIKK.

The S-adenosyl-L-methionine site is built by T146, G167, D189, and N231.

The protein belongs to the methyltransferase superfamily. PrmA family.

Its subcellular location is the cytoplasm. The catalysed reaction is L-lysyl-[protein] + 3 S-adenosyl-L-methionine = N(6),N(6),N(6)-trimethyl-L-lysyl-[protein] + 3 S-adenosyl-L-homocysteine + 3 H(+). Methylates ribosomal protein L11. In Aliivibrio salmonicida (strain LFI1238) (Vibrio salmonicida (strain LFI1238)), this protein is Ribosomal protein L11 methyltransferase.